The chain runs to 1406 residues: Sterol 3-beta-glucosyltransferase (1406 aa).

Positions 83–231 (ARFDESSDSD…IHSSHESSTS (149 aa)) are disordered. Polar residues predominate over residues 110–128 (GSSNPVNSQTEQRSGSQTS). The segment covering 209–231 (SAGRSQNSSQESSIHSSHESSTS) has biased composition (low complexity). A GRAM 1 domain is found at 236-286 (RLMEMFDFNKPEKVLVEYACSLLQSMLLQGYMYVTEGHICFYAYLPRKSTV). The region spanning 286–385 (VAIKSGYLHK…WVKALQKVIF (100 aa)) is the PH domain. Disordered stretches follow at residues 457 to 558 (ASGH…AESA) and 576 to 622 (LDKR…DGKP). Over residues 468 to 478 (HADRSPRSDRT) the composition is skewed to basic and acidic residues. Polar residues-rich tracts occupy residues 490-499 (GTSQPGNGSA) and 531-548 (SESI…SAVW). Basic and acidic residues predominate over residues 576–587 (LDKRACSDERSG). A GRAM 2 domain is found at 730–796 (DRFRAHFALP…KDVENVEKEK (67 aa)). UDP-alpha-D-glucose-binding residues include Ser-917, Arg-918, Asp-920, Ala-1220, His-1222, His-1235, Gly-1239, Thr-1240, Asp-1259, and Gln-1260. The disordered stretch occupies residues 1334–1406 (QRSIASSTPF…LTNSIHGAGR (73 aa)). The segment covering 1336–1349 (SIASSTPFSPTPSA) has biased composition (low complexity). The segment covering 1355–1375 (QGDDDVEDSEEWTFVGDDNEM) has biased composition (acidic residues). The segment covering 1376–1387 (DMSRRMRDRAIS) has biased composition (basic and acidic residues). The segment covering 1397 to 1406 (LTNSIHGAGR) has biased composition (polar residues).

The protein belongs to the glycosyltransferase 28 family.

Its subcellular location is the cytoplasm. The protein localises to the preautophagosomal structure membrane. The catalysed reaction is a sterol + UDP-alpha-D-glucose = a sterol 3-beta-D-glucoside + UDP + H(+). The enzyme catalyses ergosterol + UDP-alpha-D-glucose = ergosteryl 3-beta-D-glucoside + UDP + H(+). In terms of biological role, sterol glycosyltransferase responsible for the glycosylation of ergosterol to form ergosterol-glucoside. In Aspergillus clavatus (strain ATCC 1007 / CBS 513.65 / DSM 816 / NCTC 3887 / NRRL 1 / QM 1276 / 107), this protein is Sterol 3-beta-glucosyltransferase.